A 167-amino-acid chain; its full sequence is Transcriptional regulator MraZ (167 aa).

SpoVT-AbrB domains are found at residues 8-51 (ESHH…YGDH) and 92-135 (SLPT…KPET).

The protein belongs to the MraZ family. In terms of assembly, forms oligomers.

The protein resides in the cytoplasm. Its subcellular location is the nucleoid. The chain is Transcriptional regulator MraZ from Ruegeria sp. (strain TM1040) (Silicibacter sp.).